The following is a 350-amino-acid chain: CMP-N-acetylneuraminate-beta-galactosamide-alpha-2,3-sialyltransferase 2 (350 aa).

Residues 1 to 6 (MKCSLR) lie on the Cytoplasmic side of the membrane. The helical; Signal-anchor for type II membrane protein transmembrane segment at 7–27 (VWFLSMAFLLVFIMSLLFTYS) threads the bilayer. Residues 28–350 (HHSMATLPYL…ASKIEVYRGN (323 aa)) are Lumenal-facing. Disulfide bonds link cysteine 70–cysteine 75, cysteine 72–cysteine 149, and cysteine 152–cysteine 291. The substrate site is built by glutamine 116, asparagine 157, and asparagine 180. A glycan (N-linked (GlcNAc...) asparagine) is linked at asparagine 211. The substrate site is built by tyrosine 240, tyrosine 276, glycine 280, glycine 300, histidine 309, and histidine 326.

It belongs to the glycosyltransferase 29 family. Homodimer; disulfide-linked. Homodimer formation occurs in the endoplasmic reticulum. The soluble form derives from the membrane form by proteolytic processing. In terms of processing, N-glycosylated; necessary for proper exit from endoplasmic reticulum and trafficking to the Golgi apparatus. In terms of tissue distribution, strongly expressed in brain and liver and to a lesser extent in heart and kidney. Scarcely detectable in lung, pancreas, spleen and submaxillary gland. Expressed in L5 dorsal root ganglion (DRG) neurons (at protein level).

The protein resides in the golgi apparatus. It is found in the golgi stack membrane. The protein localises to the secreted. It carries out the reaction a beta-D-galactosyl-(1-&gt;3)-N-acetyl-alpha-D-galactosaminyl derivative + CMP-N-acetyl-beta-neuraminate = an N-acetyl-alpha-neuraminyl-(2-&gt;3)-beta-D-galactosyl-(1-&gt;3)-N-acetyl-alpha-D-galactosaminyl derivative + CMP + H(+). The enzyme catalyses a ganglioside GM1 (d18:1(4E)) + CMP-N-acetyl-beta-neuraminate = a ganglioside GD1a (d18:1(4E)) + CMP + H(+). It catalyses the reaction ganglioside GM1 (d18:1(4E)/18:0) + CMP-N-acetyl-beta-neuraminate = ganglioside GD1a (18:1(4E)/18:0) + CMP + H(+). The catalysed reaction is a ganglioside GA1 + CMP-N-acetyl-beta-neuraminate = a ganglioside GM1b + CMP + H(+). It carries out the reaction a ganglioside GA1 (d18:1(4E)) + CMP-N-acetyl-beta-neuraminate = a ganglioside GM1b (d18:1(4E)) + CMP + H(+). The enzyme catalyses a ganglioside GD1b + CMP-N-acetyl-beta-neuraminate = a ganglioside GT1b + CMP + H(+). It catalyses the reaction a ganglioside GD1b (d18:1(4E)) + CMP-N-acetyl-beta-neuraminate = a ganglioside GT1b (d18:1(4E)) + CMP + H(+). The catalysed reaction is a globoside GalGb4Cer + CMP-N-acetyl-beta-neuraminate = a globoside MSGG + CMP + H(+). It participates in protein modification; protein glycosylation. The protein operates within glycolipid biosynthesis. In terms of biological role, a beta-galactoside alpha2-3 sialyltransferase primarily involved in terminal sialylation of ganglio and globo series glycolipids. Catalyzes the transfer of sialic acid (N-acetyl-neuraminic acid; Neu5Ac) from the nucleotide sugar donor CMP-Neu5Ac onto acceptor Galbeta-(1-&gt;3)-GalNAc-terminated glycoconjugates through an alpha2-3 linkage. Sialylates GM1/GM1a, GA1/asialo-GM1 and GD1b gangliosides to form GD1a, GM1b and GT1b, respectively. Together with ST3GAL3, primarily responsible for biosynthesis of brain GD1a and GT1b that function as ligands for myelin-associated glycoprotein MAG on axons, regulating MAG expression and axonal myelin stability and regeneration. Via GT1b regulates TLR2 signaling in spinal cord microglia in response to nerve injury. Responsible for the sialylation of the pluripotent stem cell- and cancer stem cell-associated antigen SSEA3, forming SSEA4. Sialylates with low efficiency asialofetuin, presumably onto O-glycosidically linked Galbeta-(1-&gt;3)-GalNAc-O-Ser. The sequence is that of CMP-N-acetylneuraminate-beta-galactosamide-alpha-2,3-sialyltransferase 2 from Mus musculus (Mouse).